The following is a 246-amino-acid chain: Deoxycytidylate 5-hydroxymethyltransferase (246 aa).

The active site involves C148.

The protein belongs to the thymidylate synthase family.

The enzyme catalyses dCMP + (6R)-5,10-methylene-5,6,7,8-tetrahydrofolate + H2O = 5-hydroxymethyl-dCMP + (6S)-5,6,7,8-tetrahydrofolate. The sequence is that of Deoxycytidylate 5-hydroxymethyltransferase (42) from Enterobacteria phage T6 (Bacteriophage T6).